A 444-amino-acid polypeptide reads, in one-letter code: Argininosuccinate synthase (444 aa).

ATP is bound by residues 18 to 26 and Ala-44; that span reads AFSGGLDTS. Tyr-100 contacts L-citrulline. ATP-binding residues include Gly-130 and Thr-132. L-aspartate contacts are provided by Thr-132, Asn-136, and Asp-137. Asn-136 contributes to the L-citrulline binding site. Position 137 (Asp-137) interacts with ATP. L-citrulline contacts are provided by Arg-140 and Ser-193. Asp-195 provides a ligand contact to ATP. 3 residues coordinate L-citrulline: Thr-202, Glu-204, and Glu-281.

Belongs to the argininosuccinate synthase family. Type 2 subfamily. In terms of assembly, homotetramer.

It is found in the cytoplasm. It catalyses the reaction L-citrulline + L-aspartate + ATP = 2-(N(omega)-L-arginino)succinate + AMP + diphosphate + H(+). It participates in amino-acid biosynthesis; L-arginine biosynthesis; L-arginine from L-ornithine and carbamoyl phosphate: step 2/3. The sequence is that of Argininosuccinate synthase from Histophilus somni (strain 2336) (Haemophilus somnus).